The chain runs to 516 residues: Extracellular endo-inulinase inu2 (516 aa).

The first 23 residues, 1–23, serve as a signal peptide directing secretion; sequence MLNPKVAYMVWMTCLGLTLPSQA. Substrate is bound by residues 41-43 and Asn-61; that span reads MNE. Residue Glu-43 is part of the active site. Residues Asn-108 and Asn-109 are each glycosylated (N-linked (GlcNAc...) asparagine). Residue Asp-176 participates in substrate binding. A glycan (N-linked (GlcNAc...) asparagine) is linked at Asn-210. Asn-320 contacts substrate. Asn-372 carries N-linked (GlcNAc...) asparagine glycosylation.

Belongs to the glycosyl hydrolase 32 family.

The protein resides in the secreted. The enzyme catalyses Endohydrolysis of (2-&gt;1)-beta-D-fructosidic linkages in inulin.. In terms of biological role, endo-inulinase involved in utilization of the plant storage polymer inulin, consisting of fructooligosaccharides with a degree of polymerization (DP) value from 2 to 60. The protein is Extracellular endo-inulinase inu2 (inu2) of Aspergillus ficuum.